The primary structure comprises 278 residues: Chitosanase (278 aa).

Residues 1 to 41 (MRLKHPTARLALAALLVAVPRSVAAAGTVHAAPAPAGATRL) form the signal peptide. Glu63 (proton donor) is an active-site residue. Residue Asp81 is the Nucleophile of the active site.

This sequence belongs to the glycosyl hydrolase 46 family.

Its subcellular location is the secreted. The catalysed reaction is Endohydrolysis of beta-(1-&gt;4)-linkages between D-glucosamine residues in a partly acetylated chitosan.. In terms of biological role, aids in the defense against invading fungal pathogens by degrading their cell wall chitosan. The protein is Chitosanase (csn) of Nocardioides sp. (strain N106).